A 74-amino-acid polypeptide reads, in one-letter code: DNA-directed RNA polymerase subunit omega (74 aa).

It belongs to the RNA polymerase subunit omega family. As to quaternary structure, the RNAP catalytic core consists of 2 alpha, 1 beta, 1 beta' and 1 omega subunit. When a sigma factor is associated with the core the holoenzyme is formed, which can initiate transcription.

The catalysed reaction is RNA(n) + a ribonucleoside 5'-triphosphate = RNA(n+1) + diphosphate. Promotes RNA polymerase assembly. Latches the N- and C-terminal regions of the beta' subunit thereby facilitating its interaction with the beta and alpha subunits. This Helicobacter acinonychis (strain Sheeba) protein is DNA-directed RNA polymerase subunit omega.